A 268-amino-acid polypeptide reads, in one-letter code: tRNA pseudouridine synthase A (268 aa).

Asp-52 functions as the Nucleophile in the catalytic mechanism. A substrate-binding site is contributed by Tyr-110.

It belongs to the tRNA pseudouridine synthase TruA family. In terms of assembly, homodimer.

It carries out the reaction uridine(38/39/40) in tRNA = pseudouridine(38/39/40) in tRNA. Formation of pseudouridine at positions 38, 39 and 40 in the anticodon stem and loop of transfer RNAs. This chain is tRNA pseudouridine synthase A, found in Prochlorococcus marinus (strain MIT 9515).